The chain runs to 250 residues: Phosphatidylglycerol--prolipoprotein diacylglyceryl transferase (250 aa).

The next 4 helical transmembrane spans lie at 11-31 (LAIRWYGVIISIGAALGLLLA), 49-69 (FLIAFPSAIIGARLYYVIFEF), 84-104 (QGGLAIHGGIIFGVLAVYIYL), and 109-129 (ESFFEYVDVAAPSIILGQAIG). Position 130 (arginine 130) interacts with a 1,2-diacyl-sn-glycero-3-phospho-(1'-sn-glycerol). 3 helical membrane passes run 169–189 (PTFLYESIWNFIVCIFLVYLL), 196–216 (GIVFMAYIGLYSLGRFFIEGL), and 228–248 (VAQLISVLGIILSIFFIYNII).

Belongs to the Lgt family.

It localises to the cell membrane. It catalyses the reaction L-cysteinyl-[prolipoprotein] + a 1,2-diacyl-sn-glycero-3-phospho-(1'-sn-glycerol) = an S-1,2-diacyl-sn-glyceryl-L-cysteinyl-[prolipoprotein] + sn-glycerol 1-phosphate + H(+). Its pathway is protein modification; lipoprotein biosynthesis (diacylglyceryl transfer). In terms of biological role, catalyzes the transfer of the diacylglyceryl group from phosphatidylglycerol to the sulfhydryl group of the N-terminal cysteine of a prolipoprotein, the first step in the formation of mature lipoproteins. In Clostridium botulinum (strain 657 / Type Ba4), this protein is Phosphatidylglycerol--prolipoprotein diacylglyceryl transferase.